A 528-amino-acid polypeptide reads, in one-letter code: Calcium-dependent protein kinase 4 (528 aa).

The span at 1–16 (MGQEMSTQSDMQNENQ) shows a compositional bias: polar residues. The tract at residues 1-36 (MGQEMSTQSDMQNENQKGNKRNLKGSQGKNGLKERS) is disordered. A lipid anchor (N-myristoyl glycine) is attached at glycine 2. The region spanning 70-328 (YKGIKILGKG…ARDALEHEWI (259 aa)) is the Protein kinase domain. ATP is bound by residues 76–84 (LGKGSFGEV) and lysine 99. Aspartate 193 (proton acceptor) is an active-site residue. A J domain autoinhibitory motif motif is present at residues 350 to 358 (NIKQFQSTQ). A j domain region spans residues 350-386 (NIKQFQSTQKLAQAALLYMGSKLTTIDETKELTKIFK). The short motif at 359–368 (KLAQAALLYM) is the J domain EF-hand interaction motif element. EF-hand domains follow at residues 376-411 (DETK…LLKL), 423-458 (AIEV…RKLL), 459-494 (LSTE…GDVS), and 498-528 (WKTV…LCNY). 20 residues coordinate Ca(2+): aspartate 389, asparagine 391, aspartate 393, glutamine 395, glutamate 400, aspartate 436, aspartate 438, asparagine 440, tyrosine 442, glutamate 447, aspartate 472, aspartate 474, serine 476, lysine 478, glutamate 483, aspartate 506, asparagine 508, aspartate 510, glutamate 512, and glutamate 517.

It belongs to the protein kinase superfamily. Ser/Thr protein kinase family. CDPK subfamily. May interact with the pre-replication MCM complex prior male gametogenesis activation. Requires Mg(2+) as cofactor. Post-translationally, myristoylated; myristoylation may target it to different subcellular compartments. During male gametogenesis, myristoylation is required to initiate DNA replication but not for mitotic spindle assembly or axoneme activation. In terms of processing, not palmitoylated. May be autophosphorylated on Thr-234 in vitro.

The protein resides in the cytoplasm. It localises to the membrane. Its subcellular location is the chromosome. It catalyses the reaction L-seryl-[protein] + ATP = O-phospho-L-seryl-[protein] + ADP + H(+). The enzyme catalyses L-threonyl-[protein] + ATP = O-phospho-L-threonyl-[protein] + ADP + H(+). Activated by calcium. Upon calcium binding to the EF-hand domains, the C-terminus of the junction domain (J domain) undergoes a conformational change which results in the dissociation of the pseudo-substrate inhibitory motif from the catalytic domain. This, in turn, may facilitate the autophosphorylation of the activation loop at Thr-234, which leads to the kinase activation. Intracellular calcium increase is triggered by xanthurenic acid (XA), a small mosquito molecule that induces the differentiation of specialized transmission stages, the gametocytes, into male and female gametes. Activated by a decrease in temperature (20 degrees Celsius) and an increase in pH (7.6) occurring when the parasite is ingested by in the mosquito. Functionally, calcium-dependent protein kinase which acts as a sensor and effector of intracellular Ca(2+) levels probably in part downstream of cGMP-activated PKG kinase. Plays a central role in the host erythrocytes and hepatocytes infection cycles, sexual reproduction and mosquito transmission of the parasite. During the liver stage, involved in sporozoite motility and thus in sporozoite invasion of host hepatocytes, probably together with CDPK1 and CDPK5. Involved in merosome egress from host hepatocytes, probably together with CDPK5. During the asexual blood stage, involved in merozoite invasion of host erythrocytes and motility by stabilizing the inner membrane complex, a structure below the plasma membrane which acts as an anchor for the glidosome, an acto-myosin motor. Required for cell cycle progression in the male gametocyte. During male gametogenesis in the mosquito gut, required to initiate the first round of DNA replication, probably by facilitating the assembly of the pre-replicative MCM complex, to assemble the first mitotic spindle and, at the end of gametogenesis, to initiate axoneme motility, cytokinesis and subsequent exflagellation. For each of these steps, may phosphorylate SOC1, SOC2 and SOC3, respectively. Together with CDPK1, regulates ookinete gliding in the mosquito host midgut. Its function is as follows. During male gametogenesis in the mosquito gut, required to initiate the first round of DNA replication, probably by facilitating the assembly of the pre-replicative MCM complex, and to assemble the first mitotic spindle. At the end of male gametogenesis in the mosquito gut, required to initiate axoneme motility, cytokinesis and subsequent exflagellation. The sequence is that of Calcium-dependent protein kinase 4 from Plasmodium berghei (strain Anka).